A 335-amino-acid chain; its full sequence is Vitamin B12 import system permease protein BtuC (335 aa).

The next 9 helical transmembrane spans lie at 22–42, 67–87, 94–114, 117–137, 153–173, 200–220, 243–263, 281–301, and 308–328; these read LLLL…AGDV, LAVM…QSLF, PGLL…VLLG, LLPV…MTFL, LLVG…AVYF, LVLA…ALNF, VLAI…IGFV, YLLP…DVVA, and AELP…IWLL.

It belongs to the binding-protein-dependent transport system permease family. FecCD subfamily. The complex is composed of two ATP-binding proteins (BtuD), two transmembrane proteins (BtuC) and a solute-binding protein (BtuF).

Its subcellular location is the cell inner membrane. Part of the ABC transporter complex BtuCDF involved in vitamin B12 import. Involved in the translocation of the substrate across the membrane. The protein is Vitamin B12 import system permease protein BtuC of Serratia proteamaculans (strain 568).